Consider the following 390-residue polypeptide: Transaldolase (390 aa).

The active-site Schiff-base intermediate with substrate is the Lys135. EF-hand domains are found at residues 329-364 (AFCH…FDAL) and 365-388 (DHDH…LALT). Ca(2+) contacts are provided by Asp342, Asp344, Asp346, Cys348, Glu353, Asp365, Asp367, Asp369, Arg371, and Asp376.

Belongs to the transaldolase family. Type 1 subfamily.

It localises to the cytoplasm. The catalysed reaction is D-sedoheptulose 7-phosphate + D-glyceraldehyde 3-phosphate = D-erythrose 4-phosphate + beta-D-fructose 6-phosphate. It participates in carbohydrate degradation; pentose phosphate pathway; D-glyceraldehyde 3-phosphate and beta-D-fructose 6-phosphate from D-ribose 5-phosphate and D-xylulose 5-phosphate (non-oxidative stage): step 2/3. In terms of biological role, transaldolase is important for the balance of metabolites in the pentose-phosphate pathway. This chain is Transaldolase, found in Prochlorococcus marinus (strain MIT 9313).